Consider the following 143-residue polypeptide: Large ribosomal subunit protein uL16c (143 aa).

The protein belongs to the universal ribosomal protein uL16 family. In terms of assembly, part of the 50S ribosomal subunit.

The protein localises to the plastid. It is found in the chloroplast. The protein is Large ribosomal subunit protein uL16c of Spirogyra maxima (Green alga).